The following is a 147-amino-acid chain: Myosin regulatory light chain (147 aa).

T1 bears the N-acetylthreonine mark. EF-hand domains lie at 2-37 (ASAD…LGKN), 73-108 (EQSK…LGDA), and 109-144 (LTSS…GYPL). The Ca(2+) site is built by D15, D17, D19, K21, E26, D86, N90, T92, and E97.

The polypeptide is Myosin regulatory light chain (Physarum polycephalum (Slime mold)).